The primary structure comprises 472 residues: 3-isopropylmalate dehydratase large subunit (472 aa).

A disordered region spans residues 289–312 (TWGTNPAQGTGVSQVVPSPDDAKD). Residues 290–304 (WGTNPAQGTGVSQVV) are compositionally biased toward polar residues. The [4Fe-4S] cluster site is built by cysteine 347, cysteine 407, and cysteine 410.

The protein belongs to the aconitase/IPM isomerase family. LeuC type 1 subfamily. As to quaternary structure, heterodimer of LeuC and LeuD. The cofactor is [4Fe-4S] cluster.

The catalysed reaction is (2R,3S)-3-isopropylmalate = (2S)-2-isopropylmalate. It participates in amino-acid biosynthesis; L-leucine biosynthesis; L-leucine from 3-methyl-2-oxobutanoate: step 2/4. In terms of biological role, catalyzes the isomerization between 2-isopropylmalate and 3-isopropylmalate, via the formation of 2-isopropylmaleate. The polypeptide is 3-isopropylmalate dehydratase large subunit (Halalkalibacterium halodurans (strain ATCC BAA-125 / DSM 18197 / FERM 7344 / JCM 9153 / C-125) (Bacillus halodurans)).